A 634-amino-acid chain; its full sequence is Threonine--tRNA ligase (634 aa).

The 61-residue stretch at 1–61 folds into the TGS domain; sequence MINITLPDGS…DHDASLRIIT (61 aa). The tract at residues 243-534 is catalytic; sequence DHRRIGKAQD…LIEHHAGAFP (292 aa). Cys-334, His-385, and His-511 together coordinate Zn(2+).

It belongs to the class-II aminoacyl-tRNA synthetase family. As to quaternary structure, homodimer. It depends on Zn(2+) as a cofactor.

The protein localises to the cytoplasm. It carries out the reaction tRNA(Thr) + L-threonine + ATP = L-threonyl-tRNA(Thr) + AMP + diphosphate + H(+). Catalyzes the attachment of threonine to tRNA(Thr) in a two-step reaction: L-threonine is first activated by ATP to form Thr-AMP and then transferred to the acceptor end of tRNA(Thr). Also edits incorrectly charged L-seryl-tRNA(Thr). The sequence is that of Threonine--tRNA ligase from Xanthomonas axonopodis pv. citri (strain 306).